A 286-amino-acid polypeptide reads, in one-letter code: ATP synthase gamma chain (286 aa).

The protein belongs to the ATPase gamma chain family. In terms of assembly, F-type ATPases have 2 components, CF(1) - the catalytic core - and CF(0) - the membrane proton channel. CF(1) has five subunits: alpha(3), beta(3), gamma(1), delta(1), epsilon(1). CF(0) has three main subunits: a, b and c.

The protein resides in the cell inner membrane. Produces ATP from ADP in the presence of a proton gradient across the membrane. The gamma chain is believed to be important in regulating ATPase activity and the flow of protons through the CF(0) complex. This chain is ATP synthase gamma chain, found in Christiangramia forsetii (strain DSM 17595 / CGMCC 1.15422 / KT0803) (Gramella forsetii).